The chain runs to 374 residues: MAKERRRAVLELLQRPGNARCADCGAPDPDWASYTLGVFICLSCSGIHRNIPQVSKVKSVRLDAWEEAQVEFMASHGNDAARARFESKVPSFYYRPTPSDCQLLREQWIRAKYERQEFIYPEKQEPYSAGYREGFLWKRGRDNGQFLSRKFVLTEREGALKYFNRNDAKEPKAVMKIEHLNATFQPAKIGHPHGLQVTYLKDNSTRNIFIYHEDGKEIVDWFNALRAARFHYLQVAFPGAGDADLVPKLSRNYLKEGYMEKTGPKQTEGFRKRWFTMDDRRLMYFKDPLDAFARGEVFIGSKESGYTVLHGFPPSTQGHHWPHGITIVTPDRKFLFACETESDQREWVAAFQKAVDRPMLPQEYAVEAHFKHKP.

The region spanning 7–126 (RAVLELLQRP…EFIYPEKQEP (120 aa)) is the Arf-GAP domain. A C4-type zinc finger spans residues 21–44 (CADCGAPDPDWASYTLGVFICLSC). S87 is modified (phosphoserine; by PKC). 2 consecutive PH domains span residues 129-230 (AGYR…AARF) and 252-356 (NYLK…KAVD). The residue at position 272 (K272) is an N6-acetyllysine. At T276 the chain carries Phosphothreonine; by PKC.

Interacts with PRKCA, PRKCI and PRKCZ. Interacts with the N-terminal region of PRKD1. In terms of processing, phosphorylated by PRKCA, PRKCI, PRKCZ and PRKD1 in vitro. In terms of tissue distribution, expressed at highest levels in brain and at lower levels in peripheral blood leukocytes.

It localises to the nucleus. Its subcellular location is the cytoplasm. Functionally, GTPase-activating protein for the ADP ribosylation factor family. Binds phosphatidylinositol 3,4,5-trisphosphate (PtdInsP3) and inositol 1,3,4,5-tetrakisphosphate (InsP4). Regulates the incorporation of CD63 and CD9 into multivesicular bodies. In Homo sapiens (Human), this protein is Arf-GAP with dual PH domain-containing protein 1 (ADAP1).